Consider the following 420-residue polypeptide: UDP-N-acetylglucosamine 1-carboxyvinyltransferase (420 aa).

Residue 22–23 (KN) participates in phosphoenolpyruvate binding. R93 contributes to the UDP-N-acetyl-alpha-D-glucosamine binding site. The active-site Proton donor is the C117. Residue C117 is modified to 2-(S-cysteinyl)pyruvic acid O-phosphothioketal. UDP-N-acetyl-alpha-D-glucosamine-binding residues include D307 and I329.

Belongs to the EPSP synthase family. MurA subfamily.

It localises to the cytoplasm. The catalysed reaction is phosphoenolpyruvate + UDP-N-acetyl-alpha-D-glucosamine = UDP-N-acetyl-3-O-(1-carboxyvinyl)-alpha-D-glucosamine + phosphate. Its pathway is cell wall biogenesis; peptidoglycan biosynthesis. Cell wall formation. Adds enolpyruvyl to UDP-N-acetylglucosamine. The protein is UDP-N-acetylglucosamine 1-carboxyvinyltransferase of Alcanivorax borkumensis (strain ATCC 700651 / DSM 11573 / NCIMB 13689 / SK2).